The primary structure comprises 334 residues: Aspartate carbamoyltransferase catalytic subunit (334 aa).

Residues arginine 71 and threonine 72 each contribute to the carbamoyl phosphate site. L-aspartate is bound at residue lysine 99. Positions 121, 151, and 154 each coordinate carbamoyl phosphate. L-aspartate is bound by residues arginine 184 and arginine 239. Residues glycine 280 and proline 281 each contribute to the carbamoyl phosphate site.

It belongs to the aspartate/ornithine carbamoyltransferase superfamily. ATCase family. Heterododecamer (2C3:3R2) of six catalytic PyrB chains organized as two trimers (C3), and six regulatory PyrI chains organized as three dimers (R2).

It carries out the reaction carbamoyl phosphate + L-aspartate = N-carbamoyl-L-aspartate + phosphate + H(+). It functions in the pathway pyrimidine metabolism; UMP biosynthesis via de novo pathway; (S)-dihydroorotate from bicarbonate: step 2/3. Catalyzes the condensation of carbamoyl phosphate and aspartate to form carbamoyl aspartate and inorganic phosphate, the committed step in the de novo pyrimidine nucleotide biosynthesis pathway. This is Aspartate carbamoyltransferase catalytic subunit from Pseudomonas fluorescens biotype A.